The primary structure comprises 694 residues: Elongation factor G (694 aa).

Positions 12–286 (SKLRNIGIMA…AVVDYLPSPI (275 aa)) constitute a tr-type G domain. GTP-binding positions include 21–28 (AHIDAGKT), 85–89 (DTPGH), and 139–142 (NKMD).

Belongs to the TRAFAC class translation factor GTPase superfamily. Classic translation factor GTPase family. EF-G/EF-2 subfamily.

It localises to the cytoplasm. In terms of biological role, catalyzes the GTP-dependent ribosomal translocation step during translation elongation. During this step, the ribosome changes from the pre-translocational (PRE) to the post-translocational (POST) state as the newly formed A-site-bound peptidyl-tRNA and P-site-bound deacylated tRNA move to the P and E sites, respectively. Catalyzes the coordinated movement of the two tRNA molecules, the mRNA and conformational changes in the ribosome. This Pseudothermotoga lettingae (strain ATCC BAA-301 / DSM 14385 / NBRC 107922 / TMO) (Thermotoga lettingae) protein is Elongation factor G.